The sequence spans 100 residues: Large ribosomal subunit protein uL23 (100 aa).

Belongs to the universal ribosomal protein uL23 family. In terms of assembly, part of the 50S ribosomal subunit. Contacts protein L29, and trigger factor when it is bound to the ribosome.

Functionally, one of the early assembly proteins it binds 23S rRNA. One of the proteins that surrounds the polypeptide exit tunnel on the outside of the ribosome. Forms the main docking site for trigger factor binding to the ribosome. This is Large ribosomal subunit protein uL23 from Buchnera aphidicola subsp. Acyrthosiphon pisum (strain 5A).